A 622-amino-acid polypeptide reads, in one-letter code: Low affinity potassium transport system protein Kup (622 aa).

A run of 12 helical transmembrane segments spans residues 9–29, 49–69, 103–123, 137–157, 165–185, 213–233, 247–267, 276–296, 337–357, 363–383, 396–416, and 419–439; these read LPAI…TSPL, VFGF…IKYL, VIMG…TPAI, PQLD…LFMI, VGKL…GLGL, VSFI…ALYA, WFTV…ALLL, PFFL…AALA, IYIP…IVSF, LAAA…ILST, FVAL…TANL, and LLSG…VMTT.

Belongs to the HAK/KUP transporter (TC 2.A.72) family.

It is found in the cell inner membrane. The enzyme catalyses K(+)(in) + H(+)(in) = K(+)(out) + H(+)(out). Responsible for the low-affinity transport of potassium into the cell. Likely operates as a K(+):H(+) symporter. The polypeptide is Low affinity potassium transport system protein Kup (Shigella flexneri serotype 5b (strain 8401)).